Consider the following 499-residue polypeptide: Probable cytosol aminopeptidase (499 aa).

Mn(2+) contacts are provided by K269 and D274. K281 is an active-site residue. Positions 292, 351, and 353 each coordinate Mn(2+). R355 is a catalytic residue.

Belongs to the peptidase M17 family. It depends on Mn(2+) as a cofactor.

Its subcellular location is the cytoplasm. It carries out the reaction Release of an N-terminal amino acid, Xaa-|-Yaa-, in which Xaa is preferably Leu, but may be other amino acids including Pro although not Arg or Lys, and Yaa may be Pro. Amino acid amides and methyl esters are also readily hydrolyzed, but rates on arylamides are exceedingly low.. The catalysed reaction is Release of an N-terminal amino acid, preferentially leucine, but not glutamic or aspartic acids.. Presumably involved in the processing and regular turnover of intracellular proteins. Catalyzes the removal of unsubstituted N-terminal amino acids from various peptides. This is Probable cytosol aminopeptidase from Actinobacillus pleuropneumoniae serotype 5b (strain L20).